The primary structure comprises 62 residues: Conotoxin Gm5.2 (62 aa).

The N-terminal stretch at 1-22 (MRCLPVFVILLLLIASAPSVDA) is a signal peptide. The propeptide occupies 23–49 (QPKTKDDVPLAPLHDNIRSTLQTLRKK). Ser60 carries the post-translational modification Serine amide.

The protein belongs to the conotoxin T superfamily. In terms of processing, contains 2 disulfide bonds that can be either 'C1-C3, C2-C4' or 'C1-C4, C2-C3', since these disulfide connectivities have been observed for conotoxins with cysteine framework V (for examples, see AC P0DQQ7 and AC P81755). As to expression, expressed by the venom duct.

It is found in the secreted. This Conus gloriamaris (Glory-of-the-Sea cone) protein is Conotoxin Gm5.2.